Reading from the N-terminus, the 108-residue chain is Nascent polypeptide-associated complex protein (108 aa).

An NAC-A/B domain is found at Met1–Gln68.

The protein belongs to the NAC-alpha family. Homodimer. Interacts with the ribosome. Binds ribosomal RNA.

Functionally, contacts the emerging nascent chain on the ribosome. This Picrophilus torridus (strain ATCC 700027 / DSM 9790 / JCM 10055 / NBRC 100828 / KAW 2/3) protein is Nascent polypeptide-associated complex protein.